Reading from the N-terminus, the 95-residue chain is Large ribosomal subunit protein bL25 (95 aa).

The protein belongs to the bacterial ribosomal protein bL25 family. In terms of assembly, part of the 50S ribosomal subunit; part of the 5S rRNA/L5/L18/L25 subcomplex. Contacts the 5S rRNA. Binds to the 5S rRNA independently of L5 and L18.

Functionally, this is one of the proteins that binds to the 5S RNA in the ribosome where it forms part of the central protuberance. This is Large ribosomal subunit protein bL25 from Shewanella sp. (strain ANA-3).